The following is a 111-amino-acid chain: MEAKAILRTARISPQKARLVADQVRGLPAERAVNLLKFSDKKAAHLIKKVVESAIANAENNQGADVDELKVQTIMVDEGPTLKRFMARAKGRGTRILKRTSHITVVVGAAK.

It belongs to the universal ribosomal protein uL22 family. As to quaternary structure, part of the 50S ribosomal subunit.

Functionally, this protein binds specifically to 23S rRNA; its binding is stimulated by other ribosomal proteins, e.g. L4, L17, and L20. It is important during the early stages of 50S assembly. It makes multiple contacts with different domains of the 23S rRNA in the assembled 50S subunit and ribosome. In terms of biological role, the globular domain of the protein is located near the polypeptide exit tunnel on the outside of the subunit, while an extended beta-hairpin is found that lines the wall of the exit tunnel in the center of the 70S ribosome. The chain is Large ribosomal subunit protein uL22 from Stenotrophomonas maltophilia (strain R551-3).